A 200-amino-acid polypeptide reads, in one-letter code: Large ribosomal subunit protein uL4 (200 aa).

Residues 38–68 form a disordered region; it reads GRQGSKQQKTRSDVRGGGKRPWRQKGTGRAR. A compositionally biased stretch (basic residues) spans 54–65; it reads GGKRPWRQKGTG.

It belongs to the universal ribosomal protein uL4 family. In terms of assembly, part of the 50S ribosomal subunit.

In terms of biological role, one of the primary rRNA binding proteins, this protein initially binds near the 5'-end of the 23S rRNA. It is important during the early stages of 50S assembly. It makes multiple contacts with different domains of the 23S rRNA in the assembled 50S subunit and ribosome. Its function is as follows. Forms part of the polypeptide exit tunnel. This chain is Large ribosomal subunit protein uL4, found in Pseudomonas fluorescens (strain Pf0-1).